We begin with the raw amino-acid sequence, 316 residues long: Transaldolase (316 aa).

Catalysis depends on Lys-125, which acts as the Schiff-base intermediate with substrate.

Belongs to the transaldolase family. Type 1 subfamily. In terms of assembly, homodimer.

It is found in the cytoplasm. The catalysed reaction is D-sedoheptulose 7-phosphate + D-glyceraldehyde 3-phosphate = D-erythrose 4-phosphate + beta-D-fructose 6-phosphate. It functions in the pathway carbohydrate degradation; pentose phosphate pathway; D-glyceraldehyde 3-phosphate and beta-D-fructose 6-phosphate from D-ribose 5-phosphate and D-xylulose 5-phosphate (non-oxidative stage): step 2/3. Functionally, transaldolase is important for the balance of metabolites in the pentose-phosphate pathway. The sequence is that of Transaldolase from Verminephrobacter eiseniae (strain EF01-2).